The primary structure comprises 707 residues: Vicilin-like seed storage protein At2g18540 (707 aa).

The N-terminal stretch at 1–24 is a signal peptide; that stretch reads MSRFRILPLSIFLCFVSLFFCTES. In terms of domain architecture, Cupin type-1 1 spans 42–185; it reads PLLVKKDQRT…AFAVPEDILR (144 aa). N60, N203, N285, N356, N396, and N399 each carry an N-linked (GlcNAc...) asparagine glycan. Residues 247 to 403 form the Cupin type-1 2 domain; the sequence is FNVFEEDPDF…SFNLSNETIK (157 aa). Residues 439 to 696 are compositionally biased toward basic and acidic residues; sequence EEEEIERRRK…KKEEEEEKRR (258 aa). A disordered region spans residues 439 to 707; it reads EEEEIERRRK…PPQPKPPEEI (269 aa). Residues 698–707 are compositionally biased toward pro residues; sequence PPQPKPPEEI.

Belongs to the 7S seed storage protein family.

Functionally, seed storage protein. The chain is Vicilin-like seed storage protein At2g18540 from Arabidopsis thaliana (Mouse-ear cress).